A 99-amino-acid polypeptide reads, in one-letter code: Integration host factor subunit alpha (99 aa).

Belongs to the bacterial histone-like protein family. In terms of assembly, heterodimer of an alpha and a beta chain.

Its function is as follows. This protein is one of the two subunits of integration host factor, a specific DNA-binding protein that functions in genetic recombination as well as in transcriptional and translational control. This Pseudoalteromonas translucida (strain TAC 125) protein is Integration host factor subunit alpha.